The primary structure comprises 176 residues: Large ribosomal subunit protein uL10 (176 aa).

It belongs to the universal ribosomal protein uL10 family. Part of the ribosomal stalk of the 50S ribosomal subunit. The N-terminus interacts with L11 and the large rRNA to form the base of the stalk. The C-terminus forms an elongated spine to which L12 dimers bind in a sequential fashion forming a multimeric L10(L12)X complex.

Its function is as follows. Forms part of the ribosomal stalk, playing a central role in the interaction of the ribosome with GTP-bound translation factors. The protein is Large ribosomal subunit protein uL10 of Streptomyces avermitilis (strain ATCC 31267 / DSM 46492 / JCM 5070 / NBRC 14893 / NCIMB 12804 / NRRL 8165 / MA-4680).